We begin with the raw amino-acid sequence, 775 residues long: ADP-ribosylation factor GTPase-activating protein AGD4 (775 aa).

The BAR domain occupies 2–226 (ATFINLEDSP…IHQILTYAQQ (225 aa)). Residues 288 to 421 (EVIKQGYLLK…WVNKITKAIG (134 aa)) form the PH domain. The region spanning 467 to 603 (DDVSTILRGL…ALVIKDESEA (137 aa)) is the Arf-GAP domain. The segment at 482–505 (CAECNAPEPDWASLNLGVLLCIQC) adopts a C4-type zinc-finger fold. ANK repeat units follow at residues 682-711 (QGCS…DLNI) and 715-744 (HGRT…RPSI).

In terms of tissue distribution, expressed in roots, hypocotyls, cotyledons, leaf and shoot apical meristems and siliques.

Functionally, probable GTPase-activating protein. This chain is ADP-ribosylation factor GTPase-activating protein AGD4 (AGD4), found in Arabidopsis thaliana (Mouse-ear cress).